A 264-amino-acid chain; its full sequence is Thymidylate synthase (264 aa).

Arg-21 serves as a coordination point for dUMP. A (6R)-5,10-methylene-5,6,7,8-tetrahydrofolate-binding site is contributed by His-51. 126-127 (RR) contacts dUMP. The active-site Nucleophile is Cys-146. DUMP contacts are provided by residues 166 to 169 (RSAD), Asn-177, and 207 to 209 (HLY). Asp-169 lines the (6R)-5,10-methylene-5,6,7,8-tetrahydrofolate pocket. Residue Ala-263 coordinates (6R)-5,10-methylene-5,6,7,8-tetrahydrofolate.

This sequence belongs to the thymidylate synthase family. Bacterial-type ThyA subfamily. As to quaternary structure, homodimer.

Its subcellular location is the cytoplasm. The enzyme catalyses dUMP + (6R)-5,10-methylene-5,6,7,8-tetrahydrofolate = 7,8-dihydrofolate + dTMP. It functions in the pathway pyrimidine metabolism; dTTP biosynthesis. Catalyzes the reductive methylation of 2'-deoxyuridine-5'-monophosphate (dUMP) to 2'-deoxythymidine-5'-monophosphate (dTMP) while utilizing 5,10-methylenetetrahydrofolate (mTHF) as the methyl donor and reductant in the reaction, yielding dihydrofolate (DHF) as a by-product. This enzymatic reaction provides an intracellular de novo source of dTMP, an essential precursor for DNA biosynthesis. The sequence is that of Thymidylate synthase from Polynucleobacter asymbioticus (strain DSM 18221 / CIP 109841 / QLW-P1DMWA-1) (Polynucleobacter necessarius subsp. asymbioticus).